We begin with the raw amino-acid sequence, 284 residues long: Cell division protein FtsQ (284 aa).

A compositionally biased stretch (basic residues) spans 1-10 (MAFGKSKNRR). A disordered region spans residues 1-23 (MAFGKSKNRRRQDAAQQKEAVRG). The Cytoplasmic segment spans residues 1 to 34 (MAFGKSKNRRRQDAAQQKEAVRGAVRSQGPRALK). The helical transmembrane segment at 35–52 (VLGLTLGTGLLVWGGAAL) threads the bilayer. The Periplasmic portion of the chain corresponds to 53 to 284 (REWTLTSPRF…ASERSGASMR (232 aa)). Residues 62 to 130 (FELEAVSFSG…NRVSVEVTEH (69 aa)) form the POTRA domain.

The protein belongs to the FtsQ/DivIB family. FtsQ subfamily.

Its subcellular location is the cell inner membrane. Functionally, essential cell division protein. The polypeptide is Cell division protein FtsQ (Myxococcus fulvus (strain ATCC BAA-855 / HW-1)).